Reading from the N-terminus, the 508-residue chain is Probable protein kinase UbiB (508 aa).

In terms of domain architecture, Protein kinase spans 118-494 (DFDLKPVASA…QKRQNFLLLL (377 aa)). ATP contacts are provided by residues 124–132 (VASASVAQV) and Lys151. The active-site Proton acceptor is Asp286. The chain crosses the membrane as a helical span at residues 488–508 (QNFLLLLIAILLAALLAKSLL).

Belongs to the ABC1 family. UbiB subfamily.

Its subcellular location is the cell inner membrane. It participates in cofactor biosynthesis; ubiquinone biosynthesis [regulation]. Functionally, is probably a protein kinase regulator of UbiI activity which is involved in aerobic coenzyme Q (ubiquinone) biosynthesis. In Chromobacterium violaceum (strain ATCC 12472 / DSM 30191 / JCM 1249 / CCUG 213 / NBRC 12614 / NCIMB 9131 / NCTC 9757 / MK), this protein is Probable protein kinase UbiB.